Consider the following 357-residue polypeptide: Neurogenic differentiation factor 1 (357 aa).

A disordered region spans residues 1 to 94 (MTKSYSESGL…GPKKKKMTKA (94 aa)). Positions 58-78 (EEEDEDEDLEEEEEEEEEEDD) are enriched in acidic residues. Residues 81–93 (PKRRGPKKKKMTK) show a composition bias toward basic residues. The short motif at 87-93 (KKKKMTK) is the Nuclear localization signal element. Positions 101–153 (LRRMKANARERNRMHGLNAALDNLRKVVPCYSKTQKLSKIETLRLAKNYIWAL) constitute a bHLH domain. A phosphoserine mark is found at Ser-162, Ser-259, Ser-266, and Ser-274. Phosphoserine; by CaMK2 is present on Ser-336.

Efficient DNA-binding requires dimerization with another bHLH protein. Heterodimer with TCF3/E47; the heterodimer is inhibited in presence of ID2, but not NR0B2, to E-box element. Interacts with EP300; the interaction is inhibited by NR0B2. Interacts with RREB1. Interacts with ATOH8. Phosphorylated by MAPK1; phosphorylation regulates heterodimerization and DNA-binding activities. Phosphorylation on Ser-266 and Ser-274 increases transactivation on the insulin promoter in glucose-stimulated insulinoma cells. Phosphorylated. In islet cells, phosphorylated on Ser-274 upon glucose stimulation; which may be required for nuclear localization. In activated neurons, phosphorylated on Ser-336 by CaMK2; which promotes dendritic growth.

Its subcellular location is the cytoplasm. The protein resides in the nucleus. Acts as a transcriptional activator: mediates transcriptional activation by binding to E box-containing promoter consensus core sequences 5'-CANNTG-3'. Associates with the p300/CBP transcription coactivator complex to stimulate transcription of the secretin gene as well as the gene encoding the cyclin-dependent kinase inhibitor CDKN1A. Contributes to the regulation of several cell differentiation pathways, like those that promote the formation of early retinal ganglion cells, inner ear sensory neurons, granule cells forming either the cerebellum or the dentate gyrus cell layer of the hippocampus, endocrine islet cells of the pancreas and enteroendocrine cells of the small intestine. Together with PAX6 or SIX3, is required for the regulation of amacrine cell fate specification. Also required for dendrite morphogenesis and maintenance in the cerebellar cortex. Associates with chromatin to enhancer regulatory elements in genes encoding key transcriptional regulators of neurogenesis. This is Neurogenic differentiation factor 1 (Neurod1) from Rattus norvegicus (Rat).